Reading from the N-terminus, the 74-residue chain is MLLQAFIFLLAGFAAKISALMTNETSDRPLVHFTPNKGWMNDPNGLWYDAKEGKWHLYFQYNPNDTVWGLPLFW.

An N-terminal signal peptide occupies residues 1-19; the sequence is MLLQAFIFLLAGFAAKISA. The N-linked (GlcNAc...) asparagine glycan is linked to Asn-23. Substrate is bound by residues 39–42 and Gln-60; that span reads WMND. Residue Asp-42 is part of the active site. An N-linked (GlcNAc...) asparagine glycan is attached at Asn-64.

The protein belongs to the glycosyl hydrolase 32 family.

The catalysed reaction is Hydrolysis of terminal non-reducing beta-D-fructofuranoside residues in beta-D-fructofuranosides.. The sequence is that of Invertase 3 (SUC3) from Saccharomyces cerevisiae (Baker's yeast).